A 209-amino-acid polypeptide reads, in one-letter code: Uracil phosphoribosyltransferase (209 aa).

5-phospho-alpha-D-ribose 1-diphosphate is bound by residues Arg79, Arg104, and 131–139; that span reads DPMLATGGS. Uracil contacts are provided by residues Ile194 and 199-201; that span reads GDA. A 5-phospho-alpha-D-ribose 1-diphosphate-binding site is contributed by Asp200.

It belongs to the UPRTase family. Mg(2+) serves as cofactor.

The enzyme catalyses UMP + diphosphate = 5-phospho-alpha-D-ribose 1-diphosphate + uracil. It functions in the pathway pyrimidine metabolism; UMP biosynthesis via salvage pathway; UMP from uracil: step 1/1. With respect to regulation, allosterically activated by GTP. Its function is as follows. Catalyzes the conversion of uracil and 5-phospho-alpha-D-ribose 1-diphosphate (PRPP) to UMP and diphosphate. This Clostridium kluyveri (strain NBRC 12016) protein is Uracil phosphoribosyltransferase.